The following is a 90-amino-acid chain: Small ribosomal subunit protein bS18 (90 aa).

A disordered region spans residues 1–24 (MKPMRQKPGRGQGNKSISNALASK).

The protein belongs to the bacterial ribosomal protein bS18 family. As to quaternary structure, part of the 30S ribosomal subunit. Forms a tight heterodimer with protein bS6.

Functionally, binds as a heterodimer with protein bS6 to the central domain of the 16S rRNA, where it helps stabilize the platform of the 30S subunit. The polypeptide is Small ribosomal subunit protein bS18 (Chlorobium phaeovibrioides (strain DSM 265 / 1930) (Prosthecochloris vibrioformis (strain DSM 265))).